A 132-amino-acid chain; its full sequence is Small ribosomal subunit protein uS8 (132 aa).

The protein belongs to the universal ribosomal protein uS8 family. In terms of assembly, part of the 30S ribosomal subunit. Contacts proteins S5 and S12.

In terms of biological role, one of the primary rRNA binding proteins, it binds directly to 16S rRNA central domain where it helps coordinate assembly of the platform of the 30S subunit. The polypeptide is Small ribosomal subunit protein uS8 (Bacillus licheniformis (strain ATCC 14580 / DSM 13 / JCM 2505 / CCUG 7422 / NBRC 12200 / NCIMB 9375 / NCTC 10341 / NRRL NRS-1264 / Gibson 46)).